The primary structure comprises 174 residues: Male-enhanced antigen 1 (174 aa).

Disordered regions lie at residues 1 to 83 (MAAV…DGAA) and 95 to 123 (HLPDPPLESEDEDEEGAAALSSHSSIPMD). 3 stretches are compositionally biased toward acidic residues: residues 38–48 (SSEEPEEEQEE), 65–82 (PEQEEVELAPVGEGEDGA), and 101–110 (LESEDEDEEG). S103 carries the post-translational modification Phosphoserine.

As to expression, highly expressed in testis. Transcripts can be found in primary and secondary spermatocytes, and spermatids, but the protein itself is only detected in spermatids. No expression in Leydig cells, spermatogonia, or sperm. Very weak expression in the heart, kidney, spleen, thymus and ovary.

May play an important role in spermatogenesis and/or testis development. The chain is Male-enhanced antigen 1 (Mea1) from Mus musculus (Mouse).